The primary structure comprises 145 residues: Cystin-1 (145 aa).

A disordered region spans residues 1–129; the sequence is MGSGSSRSGR…PEGQSAISYD (129 aa). The N-myristoyl glycine moiety is linked to residue glycine 2. Positions 29-33 match the Ciliary targeting motif motif; it reads ASEGG. At serine 116 the chain carries Phosphoserine.

Interacts (when myristoylated) with UNC119 and UNC119B; interaction is required for localization to cilium. As to expression, expressed primarily in the kidney and liver. Expressed at lower levels in the lung, brain and heart.

The protein resides in the cell projection. The protein localises to the cilium membrane. It is found in the cytoplasm. It localises to the cytoskeleton. Its subcellular location is the cilium axoneme. This Mus musculus (Mouse) protein is Cystin-1 (Cys1).